The following is a 452-amino-acid chain: Na(+)/H(+) antiporter NhaA (452 aa).

The next 11 membrane-spanning stretches (helical) occupy residues 23 to 43 (MMLF…LSTI), 71 to 91 (LLQF…GLEI), 108 to 128 (LPIV…LLVV), 136 to 156 (GAAI…AVLG), 165 to 185 (VFLT…IALF), 189 to 209 (HINI…YLMG), 216 to 236 (LGLY…SGIH), 316 to 336 (IVGY…TLGG), 349 to 369 (VFLG…YGFV), 385 to 405 (LMAV…IATL), and 418 to 438 (EAKL…IVTL).

Belongs to the NhaA Na(+)/H(+) (TC 2.A.33) antiporter family.

It is found in the cell inner membrane. It catalyses the reaction Na(+)(in) + 2 H(+)(out) = Na(+)(out) + 2 H(+)(in). Its function is as follows. Na(+)/H(+) antiporter that extrudes sodium in exchange for external protons. The protein is Na(+)/H(+) antiporter NhaA of Porphyromonas gingivalis (strain ATCC BAA-308 / W83).